The primary structure comprises 304 residues: UDP-N-acetylenolpyruvoylglucosamine reductase (304 aa).

One can recognise an FAD-binding PCMH-type domain in the interval 31-196 (KVGGPADYLA…ISAKFNLKPG (166 aa)). The active site involves Arg-175. The active-site Proton donor is the Ser-225. Residue Glu-295 is part of the active site.

It belongs to the MurB family. Requires FAD as cofactor.

It is found in the cytoplasm. The enzyme catalyses UDP-N-acetyl-alpha-D-muramate + NADP(+) = UDP-N-acetyl-3-O-(1-carboxyvinyl)-alpha-D-glucosamine + NADPH + H(+). It participates in cell wall biogenesis; peptidoglycan biosynthesis. In terms of biological role, cell wall formation. This Streptococcus thermophilus (strain ATCC BAA-491 / LMD-9) protein is UDP-N-acetylenolpyruvoylglucosamine reductase.